The chain runs to 110 residues: UPF0060 membrane protein PBPRB0495 (110 aa).

4 helical membrane-spanning segments follow: residues 7 to 27, 33 to 53, 63 to 83, and 85 to 105; these read VGLF…PYLW, TIWL…LLTL, AAYG…VDGI, and PTVW…IIMF.

It belongs to the UPF0060 family.

The protein resides in the cell inner membrane. The protein is UPF0060 membrane protein PBPRB0495 of Photobacterium profundum (strain SS9).